A 125-amino-acid polypeptide reads, in one-letter code: Small ribosomal subunit protein uS12c (125 aa).

The tract at residues 1-23 is disordered; that stretch reads MPTLEHLTRSPRKKIKRKTKSPA. Over residues 9-20 the composition is skewed to basic residues; sequence RSPRKKIKRKTK.

The protein belongs to the universal ribosomal protein uS12 family. In terms of assembly, part of the 30S ribosomal subunit.

The protein resides in the plastid. It localises to the chloroplast. In terms of biological role, with S4 and S5 plays an important role in translational accuracy. Located at the interface of the 30S and 50S subunits. This Euglena gracilis protein is Small ribosomal subunit protein uS12c (rps12).